The sequence spans 110 residues: Integration host factor subunit alpha (110 aa).

Belongs to the bacterial histone-like protein family. In terms of assembly, heterodimer of an alpha and a beta chain.

This protein is one of the two subunits of integration host factor, a specific DNA-binding protein that functions in genetic recombination as well as in transcriptional and translational control. This Delftia acidovorans (strain DSM 14801 / SPH-1) protein is Integration host factor subunit alpha.